A 348-amino-acid polypeptide reads, in one-letter code: Holliday junction branch migration complex subunit RuvB (348 aa).

The tract at residues 1-20 (MKPPARMVSPERRSDDVGDT) is disordered. The tract at residues 1-183 (MKPPARMVSP…FGIPIRLNFY (183 aa)) is large ATPase domain (RuvB-L). Residues leucine 22, arginine 23, glycine 64, lysine 67, threonine 68, threonine 69, 130-132 (EDF), arginine 173, tyrosine 183, and arginine 220 contribute to the ATP site. Mg(2+) is bound at residue threonine 68. The interval 184–254 (TVEELEGIVT…IADHALSALE (71 aa)) is small ATPAse domain (RuvB-S). The head domain (RuvB-H) stretch occupies residues 257 to 348 (AAGLDAMDRR…FGLFGSEDDA (92 aa)). Residues arginine 293, arginine 312, and arginine 317 each contribute to the DNA site.

It belongs to the RuvB family. Homohexamer. Forms an RuvA(8)-RuvB(12)-Holliday junction (HJ) complex. HJ DNA is sandwiched between 2 RuvA tetramers; dsDNA enters through RuvA and exits via RuvB. An RuvB hexamer assembles on each DNA strand where it exits the tetramer. Each RuvB hexamer is contacted by two RuvA subunits (via domain III) on 2 adjacent RuvB subunits; this complex drives branch migration. In the full resolvosome a probable DNA-RuvA(4)-RuvB(12)-RuvC(2) complex forms which resolves the HJ.

The protein localises to the cytoplasm. The enzyme catalyses ATP + H2O = ADP + phosphate + H(+). Its function is as follows. The RuvA-RuvB-RuvC complex processes Holliday junction (HJ) DNA during genetic recombination and DNA repair, while the RuvA-RuvB complex plays an important role in the rescue of blocked DNA replication forks via replication fork reversal (RFR). RuvA specifically binds to HJ cruciform DNA, conferring on it an open structure. The RuvB hexamer acts as an ATP-dependent pump, pulling dsDNA into and through the RuvAB complex. RuvB forms 2 homohexamers on either side of HJ DNA bound by 1 or 2 RuvA tetramers; 4 subunits per hexamer contact DNA at a time. Coordinated motions by a converter formed by DNA-disengaged RuvB subunits stimulates ATP hydrolysis and nucleotide exchange. Immobilization of the converter enables RuvB to convert the ATP-contained energy into a lever motion, pulling 2 nucleotides of DNA out of the RuvA tetramer per ATP hydrolyzed, thus driving DNA branch migration. The RuvB motors rotate together with the DNA substrate, which together with the progressing nucleotide cycle form the mechanistic basis for DNA recombination by continuous HJ branch migration. Branch migration allows RuvC to scan DNA until it finds its consensus sequence, where it cleaves and resolves cruciform DNA. The chain is Holliday junction branch migration complex subunit RuvB from Bradyrhizobium sp. (strain BTAi1 / ATCC BAA-1182).